A 135-amino-acid polypeptide reads, in one-letter code: Regulator of ribonuclease activity B (135 aa).

A disordered region spans residues 114–135 (WGTYFESDEDDEEDESEDKPEA). Acidic residues predominate over residues 119–135 (ESDEDDEEDESEDKPEA).

This sequence belongs to the RraB family. As to quaternary structure, interacts with the C-terminal region of Rne.

The protein resides in the cytoplasm. In terms of biological role, globally modulates RNA abundance by binding to RNase E (Rne) and regulating its endonucleolytic activity. Can modulate Rne action in a substrate-dependent manner by altering the composition of the degradosome. In Photobacterium profundum (strain SS9), this protein is Regulator of ribonuclease activity B.